The chain runs to 215 residues: 3-isopropylmalate dehydratase small subunit (215 aa).

The protein belongs to the LeuD family. LeuD type 1 subfamily. Heterodimer of LeuC and LeuD.

The catalysed reaction is (2R,3S)-3-isopropylmalate = (2S)-2-isopropylmalate. The protein operates within amino-acid biosynthesis; L-leucine biosynthesis; L-leucine from 3-methyl-2-oxobutanoate: step 2/4. Functionally, catalyzes the isomerization between 2-isopropylmalate and 3-isopropylmalate, via the formation of 2-isopropylmaleate. This chain is 3-isopropylmalate dehydratase small subunit, found in Stutzerimonas stutzeri (strain A1501) (Pseudomonas stutzeri).